A 377-amino-acid polypeptide reads, in one-letter code: Chaperone protein DnaJ (377 aa).

A J domain is found at 5–69 (DYYEVLGISK…QKRAQYDQYG (65 aa)). Residues 134–216 (GKDAEIEIPR…CHGKGRVTKT (83 aa)) form a CR-type zinc finger. The Zn(2+) site is built by Cys147, Cys150, Cys164, Cys167, Cys190, Cys193, Cys204, and Cys207. CXXCXGXG motif repeat units lie at residues 147-154 (CDTCHGSG), 164-171 (CSHCGGKG), 190-197 (CQYCNGTG), and 204-211 (CPTCHGKG).

Belongs to the DnaJ family. As to quaternary structure, homodimer. Zn(2+) is required as a cofactor.

It is found in the cytoplasm. Functionally, participates actively in the response to hyperosmotic and heat shock by preventing the aggregation of stress-denatured proteins and by disaggregating proteins, also in an autonomous, DnaK-independent fashion. Unfolded proteins bind initially to DnaJ; upon interaction with the DnaJ-bound protein, DnaK hydrolyzes its bound ATP, resulting in the formation of a stable complex. GrpE releases ADP from DnaK; ATP binding to DnaK triggers the release of the substrate protein, thus completing the reaction cycle. Several rounds of ATP-dependent interactions between DnaJ, DnaK and GrpE are required for fully efficient folding. Also involved, together with DnaK and GrpE, in the DNA replication of plasmids through activation of initiation proteins. The protein is Chaperone protein DnaJ of Listeria monocytogenes serotype 1/2a (strain 10403S).